The sequence spans 228 residues: Large ribosomal subunit protein bL25 (228 aa).

The disordered stretch occupies residues 1 to 24 (MATVMELKATARPKSGKGAARAER).

Belongs to the bacterial ribosomal protein bL25 family. CTC subfamily. As to quaternary structure, part of the 50S ribosomal subunit; part of the 5S rRNA/L5/L18/L25 subcomplex. Contacts the 5S rRNA. Binds to the 5S rRNA independently of L5 and L18.

Functionally, this is one of the proteins that binds to the 5S RNA in the ribosome where it forms part of the central protuberance. The polypeptide is Large ribosomal subunit protein bL25 (Nitrobacter winogradskyi (strain ATCC 25391 / DSM 10237 / CIP 104748 / NCIMB 11846 / Nb-255)).